An 839-amino-acid chain; its full sequence is Homeobox-leucine zipper protein HOX10 (839 aa).

2 disordered regions span residues 1-24 (MAAA…SGMD) and 132-157 (QNTP…RDAS). The homeobox DNA-binding region spans 24–87 (DSGKYVRYTP…NRRCRDKQRK (64 aa)). Positions 91 to 134 (RLQAVNRKLTAMNKLLMEENERLQKQVSQLVHENAHMRQQLQNT) form a coiled coil. Positions 155 to 383 (DASNPSGLLS…IAQETSGEVV (229 aa)) constitute an START domain.

Belongs to the HD-ZIP homeobox family. Class III subfamily. Expressed in stems, leaf sheaths and blades and panicles.

It localises to the nucleus. Its function is as follows. Probable transcription factor. In Oryza sativa subsp. indica (Rice), this protein is Homeobox-leucine zipper protein HOX10 (HOX10).